The sequence spans 156 residues: Small ribosomal subunit protein uS7 (156 aa).

The protein belongs to the universal ribosomal protein uS7 family. As to quaternary structure, part of the 30S ribosomal subunit. Contacts proteins S9 and S11.

In terms of biological role, one of the primary rRNA binding proteins, it binds directly to 16S rRNA where it nucleates assembly of the head domain of the 30S subunit. Is located at the subunit interface close to the decoding center, probably blocks exit of the E-site tRNA. The polypeptide is Small ribosomal subunit protein uS7 (Limosilactobacillus reuteri (strain DSM 20016) (Lactobacillus reuteri)).